The primary structure comprises 259 residues: MRILISNDDGIQAEGINALRACLQEQNEIYIVAPDRERSATGHKITMHRPLRVKEWHYPEAKTVGWAVDGTPADCVKLGLEALLPAPPDLVISGINLGPNLGTDVLYSGTVSAAIEGIINGIPAIAVSLASYDYRDFSFSGKLIKELVSAFGNRLPDKTLLNINVPPGKPCGIKVTRLGNRRYINIFDKRTDPRGRVYYWMAGEPFDLDEDDPDTDVWAVKEGYVSITPVHFDLTDYKIMERLKKLLKTAKILNRELKD.

A divalent metal cation-binding residues include Asp-8, Asp-9, Ser-39, and Asn-96.

Belongs to the SurE nucleotidase family. It depends on a divalent metal cation as a cofactor.

It localises to the cytoplasm. It catalyses the reaction a ribonucleoside 5'-phosphate + H2O = a ribonucleoside + phosphate. Its function is as follows. Nucleotidase that shows phosphatase activity on nucleoside 5'-monophosphates. The polypeptide is 5'-nucleotidase SurE (Pelotomaculum thermopropionicum (strain DSM 13744 / JCM 10971 / SI)).